The sequence spans 39 residues: Natriuretic peptide CnNP-a (39 aa).

The propeptide occupies 1 to 8 (SGSKTAKI). A disulfide bond links cysteine 12 and cysteine 28.

Belongs to the natriuretic peptide family. Expressed by the venom gland.

The protein localises to the secreted. Functionally, snake venom natriuretic peptide that targets both NPR1 and NPR2. Exhibits hypotensive and vasodepressor activities. This chain is Natriuretic peptide CnNP-a, found in Cryptophis nigrescens (Eastern small-eyed snake).